A 189-amino-acid polypeptide reads, in one-letter code: Putative manganese efflux pump MntP (189 aa).

A run of 6 helical transmembrane segments spans residues isoleucine 3–serine 23, methionine 41–alanine 61, alanine 62–isoleucine 82, serine 103–valine 123, isoleucine 132–methionine 152, and isoleucine 167–glycine 187.

Belongs to the MntP (TC 9.B.29) family.

The protein resides in the cell inner membrane. Its function is as follows. Probably functions as a manganese efflux pump. The polypeptide is Putative manganese efflux pump MntP (Methylobacillus flagellatus (strain ATCC 51484 / DSM 6875 / VKM B-1610 / KT)).